A 1403-amino-acid chain; its full sequence is Nidogen-2 (1403 aa).

Positions 1 to 30 are cleaved as a signal peptide; that stretch reads MFRDPTAGWLTPPSPLSLLVMLLLLSRVGA. The NIDO domain maps to 108–274; that stretch reads PFLADIDTSH…GVWAFHIGSR (167 aa). A disordered region spans residues 323–403; that stretch reads EDVEYPPVEP…KQGRPVGEGE (81 aa). 2 O-linked (Xyl...) (chondroitin sulfate) serine glycosylation sites follow: Ser386 and Ser475. The span at 386-395 shows a compositional bias: polar residues; it reads SASLDPQTKQ. An EGF-like 1 domain is found at 507-547; that stretch reads NLETCEHSHGRCSQHAFCTDYTTGFCCHCQSRFYGNGKHCL. Intrachain disulfides connect Cys511–Cys524, Cys518–Cys533, and Cys535–Cys546. The region spanning 551 to 781 is the Nidogen G2 beta-barrel domain; it reads APHRVNGKVS…GPVEVDSAPV (231 aa). Asn681, Asn716, and Asn726 each carry an N-linked (GlcNAc...) asparagine glycan. The region spanning 782–823 is the EGF-like 2 domain; sequence GVNPCYDGSHTCDTTARCHPGTGVDYTCECTPGFQGDGRSCV. 18 cysteine pairs are disulfide-bonded: Cys786–Cys799, Cys793–Cys809, Cys811–Cys822, Cys828–Cys841, Cys835–Cys850, Cys852–Cys865, Cys875–Cys890, Cys882–Cys900, Cys902–Cys913, Cys919–Cys930, Cys924–Cys939, Cys941–Cys952, Cys968–Cys991, Cys1002–Cys1009, Cys1011–Cys1033, Cys1047–Cys1071, Cys1082–Cys1089, and Cys1091–Cys1112. Residues 824-862 enclose the EGF-like 3; calcium-binding domain; that stretch reads DVNECATGFHRCGPNSVCVNLVGSYRCECRSGYEFADDQ. One can recognise an EGF-like 4 domain in the interval 871 to 914; that stretch reads PPNPCLDGSHTCAPEGQARCIHHGGSSFSCACLPGFIGTGHQCS. The EGF-like 5; calcium-binding domain occupies 915 to 953; that stretch reads DVDECAENRCHEAAICYNTPGSFSCRCQPGYRGDGFHCT. The short motif at 946–948 is the Cell attachment site element; sequence RGD. Thyroglobulin type-1 domains lie at 965 to 1033 and 1044 to 1112; these read LKPC…PPHC and RTVC…RPAC. The segment at 1021 to 1043 is disordered; it reads GTQTPPGSTPPHCGPPPEPTQRP. The span at 1027-1040 shows a compositional bias: pro residues; that stretch reads GSTPPHCGPPPEPT. Asn1152 is a glycosylation site (N-linked (GlcNAc...) asparagine). 5 LDL-receptor class B repeats span residues 1182-1225, 1226-1268, 1269-1313, 1314-1355, and 1357-1401; these read RMVY…DHFR, RTMY…DPIR, GNLY…DPFS, KLLC…YADH, and YHTD…CPTG. An Omega-N-methylarginine modification is found at Arg1336.

In terms of assembly, interacts with LAMA2. Interacts with COL13A1. Interacts with EFEMP2. Post-translationally, highly N- and O-glycosylated.

The protein resides in the secreted. The protein localises to the extracellular space. It is found in the extracellular matrix. Its subcellular location is the basement membrane. In terms of biological role, cell adhesion glycoprotein. Might be involved in osteoblast differentiation. It probably has a role in cell-extracellular matrix interactions. In Mus musculus (Mouse), this protein is Nidogen-2 (Nid2).